The sequence spans 303 residues: Glutamyl-Q tRNA(Asp) synthetase (303 aa).

Residues 9–13 (RFAPS) and glutamate 45 contribute to the L-glutamate site. The short motif at 12 to 22 (PSPSGSLHFGS) is the 'HIGH' region element. Zn(2+) is bound by residues cysteine 101, cysteine 103, tyrosine 115, and cysteine 119. The L-glutamate site is built by tyrosine 172 and arginine 190. The short motif at 228–232 (KLSKQ) is the 'KMSKS' region element. Lysine 231 is an ATP binding site.

Belongs to the class-I aminoacyl-tRNA synthetase family. GluQ subfamily. Zn(2+) serves as cofactor.

Catalyzes the tRNA-independent activation of glutamate in presence of ATP and the subsequent transfer of glutamate onto a tRNA(Asp). Glutamate is transferred on the 2-amino-5-(4,5-dihydroxy-2-cyclopenten-1-yl) moiety of the queuosine in the wobble position of the QUC anticodon. The protein is Glutamyl-Q tRNA(Asp) synthetase of Serratia proteamaculans (strain 568).